A 423-amino-acid chain; its full sequence is AP-1 complex subunit mu-2 (423 aa).

Positions 168-421 (KNEVFIDVIE…ITQSGDYQLR (254 aa)) constitute an MHD domain.

The protein belongs to the adaptor complexes medium subunit family. As to quaternary structure, adaptor protein complex 1 (AP-1) is a heterotetramer composed of two large adaptins (gamma-type subunit AP1G1 and beta-type subunit AP1B1), a medium adaptin (mu-type subunit AP1M1 or AP1M2) and a small adaptin (sigma-type subunit AP1S1 or AP1S2 or AP1S3). Interacts with P2X4. Post-translationally, phosphorylation of membrane-bound AP1M1/AP1M2 increases its affinity for sorting signals.

The protein localises to the golgi apparatus. The protein resides in the cytoplasmic vesicle. It is found in the clathrin-coated vesicle membrane. Functionally, subunit of clathrin-associated adaptor protein complex 1 that plays a role in protein sorting in the trans-Golgi network (TGN) and endosomes. The AP complexes mediate the recruitment of clathrin to membranes and the recognition of sorting signals within the cytosolic tails of transmembrane cargo molecules. The polypeptide is AP-1 complex subunit mu-2 (AP1M2) (Homo sapiens (Human)).